A 356-amino-acid polypeptide reads, in one-letter code: S-adenosylmethionine:tRNA ribosyltransferase-isomerase (356 aa).

It belongs to the QueA family. As to quaternary structure, monomer.

The protein localises to the cytoplasm. The enzyme catalyses 7-aminomethyl-7-carbaguanosine(34) in tRNA + S-adenosyl-L-methionine = epoxyqueuosine(34) in tRNA + adenine + L-methionine + 2 H(+). It participates in tRNA modification; tRNA-queuosine biosynthesis. Transfers and isomerizes the ribose moiety from AdoMet to the 7-aminomethyl group of 7-deazaguanine (preQ1-tRNA) to give epoxyqueuosine (oQ-tRNA). The chain is S-adenosylmethionine:tRNA ribosyltransferase-isomerase from Enterobacter sp. (strain 638).